Consider the following 492-residue polypeptide: KAT8 regulatory NSL complex subunit 2 (492 aa).

Residue K78 forms a Glycyl lysine isopeptide (Lys-Gly) (interchain with G-Cter in SUMO2) linkage. The interval 127–182 is disordered; that stretch reads LGSQTPESSRSEASRILDEDSWSDGEQEPITVDQTWRGDPDSEADSIDSDQEDPLK. T131 is modified (phosphothreonine). Residues 135–144 show a composition bias toward basic and acidic residues; it reads SRSEASRILD. Phosphoserine occurs at positions 147, 149, 168, 172, and 175. Residues 167-178 show a composition bias toward acidic residues; sequence DSEADSIDSDQE. The interval 308–364 is required for interaction with other NSL complex members; the sequence is DVRCSNQSLPMTRHCLTHICQDTNQVLFKCCQGSEEVPCNKPVPVSLSEDPCCPLHF. The segment at 455 to 492 is disordered; sequence AGDGCRSQGSRNSEKGSAPLSQSGLATANGKPEPTSIS.

In terms of assembly, component of the NSL complex at least composed of KAT8/MOF, KANSL1, KANSL2, KANSL3, MCRS1, PHF20, OGT1/OGT, WDR5 and HCFC1.

The protein resides in the nucleus. It localises to the mitochondrion. Its function is as follows. Non-catalytic component of the NSL histone acetyltransferase complex, a multiprotein complex that mediates histone H4 acetylation at 'Lys-5'- and 'Lys-8' (H4K5ac and H4K8ac) at transcription start sites and promotes transcription initiation. Required for NSL complex stability and for transcription of intraciliary transport genes in both ciliated and non-ciliated cells by regulating histone H4 acetylation at 'Lys-5'- and 'Lys-12' (H4K5ac and H4K12ac). This is necessary for cilium assembly in ciliated cells and for organization of the microtubule cytoskeleton in non-ciliated cells. Required within the NSL complex to maintain nuclear architecture stability by promoting KAT8-mediated acetylation of lamin LMNA. The chain is KAT8 regulatory NSL complex subunit 2 (KANSL2) from Pongo abelii (Sumatran orangutan).